We begin with the raw amino-acid sequence, 504 residues long: MSIKAEEISSIIKQQIENYQSELKVSDVGTVTYIGDGIARAHGLDNAMAGELLEFSNGVMGMAQNLETNDVGIIILGPYTEIREGDEVRRTGKIMEVPVGEALIGRVVNSLGQPVDGLGPIETTGTRPIEAVAPGVMQRQSVNEPLQTGIKAIDALVPIGRGQRELIIGDRQTGKTSVAIDTILNQADQDMICIYVAIGQKESTVRNAVETLRHHGALDYTIVVTAAASQPAPLLYLAPYAGVAMAEEFMYSGKHVLVVYDDLSKQAAAYRELSLLLRRPPGREAYPGDVFYLHSRLLERAAKLNDSLGGGSITALPFVETQAGDISAYIPTNVISITDGQIFLQSDLFFSGVRPAINAGLSVSRVGGSAQIKAMKTVAGTLRLDLAAYRELESFSQFGSDLDAATRAKLERGKRTVEVLKQDLHKPLKVEKQVLILYALVHKYLDDVPVHDVLRFESEMNTWFDHNHPELLEEIRTTKKLPDEAKLEAALKEFKNTFVPSEEK.

Gly-169–Thr-176 is an ATP binding site.

It belongs to the ATPase alpha/beta chains family. In terms of assembly, F-type ATPases have 2 components, CF(1) - the catalytic core - and CF(0) - the membrane proton channel. CF(1) has five subunits: alpha(3), beta(3), gamma(1), delta(1), epsilon(1). CF(0) has three main subunits: a(1), b(2) and c(9-12). The alpha and beta chains form an alternating ring which encloses part of the gamma chain. CF(1) is attached to CF(0) by a central stalk formed by the gamma and epsilon chains, while a peripheral stalk is formed by the delta and b chains.

It is found in the cell membrane. It catalyses the reaction ATP + H2O + 4 H(+)(in) = ADP + phosphate + 5 H(+)(out). Produces ATP from ADP in the presence of a proton gradient across the membrane. The alpha chain is a regulatory subunit. This chain is ATP synthase subunit alpha 2, found in Listeria innocua serovar 6a (strain ATCC BAA-680 / CLIP 11262).